Reading from the N-terminus, the 86-residue chain is Large ribosomal subunit protein bL28 (86 aa).

It belongs to the bacterial ribosomal protein bL28 family.

This Bacteroides fragilis (strain ATCC 25285 / DSM 2151 / CCUG 4856 / JCM 11019 / LMG 10263 / NCTC 9343 / Onslow / VPI 2553 / EN-2) protein is Large ribosomal subunit protein bL28.